A 137-amino-acid polypeptide reads, in one-letter code: Large ribosomal subunit protein uL16 (137 aa).

The protein belongs to the universal ribosomal protein uL16 family. Part of the 50S ribosomal subunit.

Functionally, binds 23S rRNA and is also seen to make contacts with the A and possibly P site tRNAs. The sequence is that of Large ribosomal subunit protein uL16 from Beijerinckia indica subsp. indica (strain ATCC 9039 / DSM 1715 / NCIMB 8712).